The following is a 299-amino-acid chain: Non-homologous end-joining factor 1 (299 aa).

Positions 1-135 are globular head; that stretch reads MEELEQGLLM…ASPSLVSQHL (135 aa). Residues 128-170 are a coiled coil; sequence PSLVSQHLIRPLMGMSLALQCQVRELATLLHMKDLEIQDYQES. Phosphoserine; by PRKDC is present on residues S132, S203, S245, and S251. Positions 224–288 are C-terminal tail; sequence QEVQVGQKHQ…GPLQRPQLSK (65 aa). The span at 255–266 shows a compositional bias: polar residues; sequence NQPEQLVSSAPT. The segment at 255–299 is disordered; sequence NQPEQLVSSAPTLSAPEKESTGTSGPLQRPQLSKVKRKKPRGLFS. Residue S263 is modified to Phosphoserine. A Phosphothreonine modification is found at T266. Position 287 is a phosphoserine (S287). A compositionally biased stretch (basic residues) spans 288–299; it reads KVKRKKPRGLFS. An XLM motif is present at residues 289-299; the sequence is VKRKKPRGLFS.

The protein belongs to the XRCC4-XLF family. XLF subfamily. Homodimer; mainly exists as a homodimer when not associated with XRCC4. Interacts with XRCC4; the interaction is direct and is mediated via a head-to-head interaction between N-terminal head regions. Component of the core long-range non-homologous end joining (NHEJ) complex (also named DNA-PK complex) composed of PRKDC, LIG4, XRCC4, XRCC6/Ku70, XRCC5/Ku86 and NHEJ1/XLF. Additional component of the NHEJ complex includes PAXX. Following autophosphorylation, PRKDC dissociates from DNA, leading to formation of the short-range NHEJ complex, composed of LIG4, XRCC4, XRCC6/Ku70, XRCC5/Ku86 and NHEJ1/XLF. Interacts with POLL (DNA polymerase lambda); promoting POLL recruitment to double-strand breaks (DSBs) and stimulation of the end-filling activity of POLL. Post-translationally, phosphorylated by PRKDC at the C-terminus in response to DNA damage. Phosphorylations by PRKDC at the C-terminus of XRCC4 and NHEJ1/XLF are highly redundant and regulate ability of the XRCC4-NHEJ1/XLF subcomplex to bridge DNA. Phosphorylation does not prevent interaction with XRCC4 but disrupts ability to bridge DNA and promotes detachment from DNA. In terms of tissue distribution, ubiquitously expressed.

The protein resides in the nucleus. Its subcellular location is the chromosome. Functionally, DNA repair protein involved in DNA non-homologous end joining (NHEJ); it is required for double-strand break (DSB) repair and V(D)J recombination and is also involved in telomere maintenance. Plays a key role in NHEJ by promoting the ligation of various mismatched and non-cohesive ends. Together with PAXX, collaborates with DNA polymerase lambda (POLL) to promote joining of non-cohesive DNA ends. May act in concert with XRCC5-XRCC6 (Ku) to stimulate XRCC4-mediated joining of blunt ends and several types of mismatched ends that are non-complementary or partially complementary. In some studies, has been shown to associate with XRCC4 to form alternating helical filaments that bridge DNA and act like a bandage, holding together the broken DNA until it is repaired. Alternatively, it has also been shown that rather than forming filaments, a single NHEJ1 dimer interacts through both head domains with XRCC4 to promote the close alignment of DNA ends. The XRCC4-NHEJ1/XLF subcomplex binds to the DNA fragments of a DSB in a highly diffusive manner and robustly bridges two independent DNA molecules, holding the broken DNA fragments in close proximity to one other. The mobility of the bridges ensures that the ends remain accessible for further processing by other repair factors. Binds DNA in a length-dependent manner. This is Non-homologous end-joining factor 1 from Homo sapiens (Human).